The chain runs to 268 residues: Indole-3-glycerol phosphate synthase (268 aa).

Belongs to the TrpC family.

The catalysed reaction is 1-(2-carboxyphenylamino)-1-deoxy-D-ribulose 5-phosphate + H(+) = (1S,2R)-1-C-(indol-3-yl)glycerol 3-phosphate + CO2 + H2O. The protein operates within amino-acid biosynthesis; L-tryptophan biosynthesis; L-tryptophan from chorismate: step 4/5. The sequence is that of Indole-3-glycerol phosphate synthase from Micrococcus luteus (strain ATCC 4698 / DSM 20030 / JCM 1464 / CCM 169 / CCUG 5858 / IAM 1056 / NBRC 3333 / NCIMB 9278 / NCTC 2665 / VKM Ac-2230) (Micrococcus lysodeikticus).